Here is a 689-residue protein sequence, read N- to C-terminus: Glycine--tRNA ligase beta subunit (689 aa).

Belongs to the class-II aminoacyl-tRNA synthetase family. As to quaternary structure, tetramer of two alpha and two beta subunits.

It is found in the cytoplasm. The enzyme catalyses tRNA(Gly) + glycine + ATP = glycyl-tRNA(Gly) + AMP + diphosphate. This Salmonella typhi protein is Glycine--tRNA ligase beta subunit.